The chain runs to 251 residues: Aquaporin (251 aa).

The Cytoplasmic portion of the chain corresponds to 1 to 11 (MAGETLRKIQS). The chain crosses the membrane as a helical span at residues 12 to 32 (LLGEMVASFIFGFAVYSAILG). Residues 33–42 (STIAQQPAAK) lie on the Extracellular side of the membrane. The helical transmembrane segment at 43–63 (VIIGLTVGFSAIGIIYSFSDV) threads the bilayer. Over 64 to 86 (TIAHFNPAITLAAILTGKMGILC) the chain is Cytoplasmic. Residues 69–71 (NPA) carry the NPA motif. Residues 87 to 107 (GLGYMLAQCVGFILAVCALLV) form a helical membrane-spanning segment. Residues 108–133 (CSPVGYKETLNVIRPAPAPFGADNLN) are Extracellular-facing. A helical membrane pass occupies residues 134 to 154 (VFFTEFFLTAILVHIAFAVAV). Residues 155–179 (NPYRPKVDTDGKFVDPDEKEPVDRR) are Cytoplasmic-facing. The helical transmembrane segment at 180–200 (ITAPLCIGLTLGFLAFMGLVT) threads the bilayer. Topologically, residues 201 to 224 (SGGAFNPGLTLAPVIMSNTWQHFW) are extracellular. Positions 206–208 (NPG) match the NPG motif. The helical transmembrane segment at 225–245 (LYLGAQYLGGLVGGLLQVFVL) threads the bilayer. The Cytoplasmic segment spans residues 246 to 251 (YKLSSN).

This sequence belongs to the MIP/aquaporin (TC 1.A.8) family.

Its subcellular location is the cell membrane. In terms of biological role, water channel required to facilitate the transport of water across membranes. Involved in osmotolerance. In Encephalitozoon hellem (Microsporidian parasite), this protein is Aquaporin (AQP).